The chain runs to 204 residues: NADH-quinone oxidoreductase subunit C (204 aa).

It belongs to the complex I 30 kDa subunit family. In terms of assembly, NDH-1 is composed of 14 different subunits. Subunits NuoB, C, D, E, F, and G constitute the peripheral sector of the complex.

The protein resides in the cell inner membrane. The catalysed reaction is a quinone + NADH + 5 H(+)(in) = a quinol + NAD(+) + 4 H(+)(out). In terms of biological role, NDH-1 shuttles electrons from NADH, via FMN and iron-sulfur (Fe-S) centers, to quinones in the respiratory chain. The immediate electron acceptor for the enzyme in this species is believed to be ubiquinone. Couples the redox reaction to proton translocation (for every two electrons transferred, four hydrogen ions are translocated across the cytoplasmic membrane), and thus conserves the redox energy in a proton gradient. This is NADH-quinone oxidoreductase subunit C from Rhodopseudomonas palustris (strain ATCC BAA-98 / CGA009).